Consider the following 168-residue polypeptide: Cytochrome c-type biogenesis protein CcmE (168 aa).

The Cytoplasmic segment spans residues 1–23 (MTTAPSGLPGTPLPPARRRERPR). The chain crosses the membrane as a helical; Signal-anchor for type II membrane protein span at residues 24-44 (WPLLVAGAAVLGLIGYMVLGN). The Extracellular portion of the chain corresponds to 45 to 168 (ANSNLVYYVL…KILNDQSTKP (124 aa)). 2 residues coordinate heme: H137 and Y141. The disordered stretch occupies residues 145-168 (DSKGEGQYSQDDLKKILNDQSTKP).

This sequence belongs to the CcmE/CycJ family.

Its subcellular location is the cell membrane. Functionally, heme chaperone required for the biogenesis of c-type cytochromes. Transiently binds heme delivered by CcmC and transfers the heme to apo-cytochromes in a process facilitated by CcmF and CcmH. This is Cytochrome c-type biogenesis protein CcmE from Deinococcus radiodurans (strain ATCC 13939 / DSM 20539 / JCM 16871 / CCUG 27074 / LMG 4051 / NBRC 15346 / NCIMB 9279 / VKM B-1422 / R1).